The chain runs to 101 residues: Phosphoribosyl-AMP cyclohydrolase (101 aa).

Mg(2+) is bound at residue Asp-71. Cys-72 lines the Zn(2+) pocket. Mg(2+) contacts are provided by Asp-73 and Asp-75. The Zn(2+) site is built by Cys-88 and Cys-95.

It belongs to the PRA-CH family. Homodimer. Mg(2+) is required as a cofactor. It depends on Zn(2+) as a cofactor.

The protein localises to the cytoplasm. The enzyme catalyses 1-(5-phospho-beta-D-ribosyl)-5'-AMP + H2O = 1-(5-phospho-beta-D-ribosyl)-5-[(5-phospho-beta-D-ribosylamino)methylideneamino]imidazole-4-carboxamide. It functions in the pathway amino-acid biosynthesis; L-histidine biosynthesis; L-histidine from 5-phospho-alpha-D-ribose 1-diphosphate: step 3/9. In terms of biological role, catalyzes the hydrolysis of the adenine ring of phosphoribosyl-AMP. The sequence is that of Phosphoribosyl-AMP cyclohydrolase from Bacillus cereus (strain AH820).